The chain runs to 677 residues: Serine/threonine-protein kinase YPK2/YKR2 (677 aa).

The span at 1 to 12 shows a compositional bias: basic residues; the sequence is MHSWRISKFKLG. The segment at 1–115 is disordered; the sequence is MHSWRISKFK…ETQGPSSESG (115 aa). A compositionally biased stretch (basic and acidic residues) spans 41–56; that stretch reads KHHDGSPKNHNHEHEH. Polar residues-rich tracts occupy residues 61–93 and 101–115; these read INTN…NDNS and SQSS…SESG. Phosphothreonine occurs at positions 63 and 66. The residue at position 72 (S72) is a Phosphoserine. One can recognise a Protein kinase domain in the interval 344–599; that stretch reads FDLLKVIGKG…TDEIRNHPFF (256 aa). Residues 350-358 and K373 each bind ATP; that span reads IGKGSFGKV. Catalysis depends on D467, which acts as the Proton acceptor. T499 carries the post-translational modification Phosphothreonine. Residue T501 is modified to Phosphothreonine; by PKH2. Positions 600–670 constitute an AGC-kinase C-terminal domain; sequence KDISWKKLLL…IGDEQLGDSP (71 aa). At S641 the chain carries Phosphoserine; by TOR2. S650 bears the Phosphoserine mark. T659 carries the post-translational modification Phosphothreonine; by TOR2. Residue S669 is modified to Phosphoserine.

The protein belongs to the protein kinase superfamily. AGC Ser/Thr protein kinase family. RAC subfamily. Autophosphorylated. Phosphorylated by PKH2 and TOR2.

It is found in the cytoplasm. It catalyses the reaction L-seryl-[protein] + ATP = O-phospho-L-seryl-[protein] + ADP + H(+). It carries out the reaction L-threonyl-[protein] + ATP = O-phospho-L-threonyl-[protein] + ADP + H(+). With respect to regulation, activated by phytosphingosine (PHS), a sphingoid long chain base. Activated by PKH2 phosphorylation. Kinase activity is regulated by TOR2 via direct phosphorylation of Ser-641 and Thr-659. Plays an essential role in the proliferation of yeast cells. Involved in a signaling pathway, required for optimal cell wall integrity, that acts in parallel with the PKC1-SLT2-dependent pathway. A substrate of TOR complex 2 (TORC2) and required for TORC2 to regulate spatial aspects of cell growth. Phosphorylation of residue Thr-501 is indispensable for function. May act as a downstream kinase in the sphingolipid-mediated signaling pathway. In Saccharomyces cerevisiae (strain ATCC 204508 / S288c) (Baker's yeast), this protein is Serine/threonine-protein kinase YPK2/YKR2 (YPK2).